The chain runs to 37 residues: Neuropeptide Y1-like conopeptide (37 aa).

At Phe-37 the chain carries Phenylalanine amide.

The protein belongs to the NPY family. In terms of tissue distribution, expressed by the venom duct.

Its subcellular location is the secreted. Its function is as follows. Causes hyperactivity such as jumping, rapid circling and tail flicking, when intraventricularly injected into mice brain. This chain is Neuropeptide Y1-like conopeptide, found in Conus betulinus (Beech cone).